We begin with the raw amino-acid sequence, 236 residues long: Small ribosomal subunit protein uS2c (236 aa).

Belongs to the universal ribosomal protein uS2 family.

The protein resides in the plastid. The protein localises to the chloroplast. The protein is Small ribosomal subunit protein uS2c (rps2) of Calycanthus floridus var. glaucus (Eastern sweetshrub).